Reading from the N-terminus, the 199-residue chain is Phosphatidylethanolamine N-methyltransferase (199 aa).

Residues 2–12 (SWLLGYVDPTE) lie on the Lumenal side of the membrane. The segment at residues 13–33 (PSFVAAVLTIVFNPLFWNVVA) is an intramembrane region (helical). Residues 34-45 (RWEQRTRKLSRA) are Lumenal-facing. The helical transmembrane segment at 46 to 66 (FGSPYLACYSLGSIILLLNIL) threads the bilayer. At 67 to 93 (RSHCFTQAMMSQPKMEGLDSHTIYFLG) the chain is on the cytoplasmic side. The chain crosses the membrane as a helical span at residues 94-114 (LALLGWGLVFVLSSFYALGFT). Position 98-100 (98-100 (GWG)) interacts with S-adenosyl-L-methionine. Topologically, residues 115–157 (GTFLGDYFGILKESRVTTFPFSVLDNPMYWGSTANYLGWALMH) are lumenal. The helical transmembrane segment at 158–178 (ASPTGLLLTVLVALVYVVALL) threads the bilayer. Over 179-199 (FEEPFTAEIYRRKATRLHKRS) the chain is Cytoplasmic. 180-181 (EE) is a binding site for S-adenosyl-L-methionine.

Belongs to the class VI-like SAM-binding methyltransferase superfamily. PEMT/PEM2 methyltransferase family. In terms of tissue distribution, expressed in liver (at protein level).

It is found in the endoplasmic reticulum membrane. The protein resides in the mitochondrion membrane. It carries out the reaction a 1,2-diacyl-sn-glycero-3-phosphoethanolamine + S-adenosyl-L-methionine = a 1,2-diacyl-sn-glycero-3-phospho-N-methylethanolamine + S-adenosyl-L-homocysteine + H(+). The enzyme catalyses a 1,2-diacyl-sn-glycero-3-phospho-N-methylethanolamine + S-adenosyl-L-methionine = a 1,2-diacyl-sn-glycero-3-phospho-N,N-dimethylethanolamine + S-adenosyl-L-homocysteine + H(+). The catalysed reaction is a 1,2-diacyl-sn-glycero-3-phospho-N,N-dimethylethanolamine + S-adenosyl-L-methionine = a 1,2-diacyl-sn-glycero-3-phosphocholine + S-adenosyl-L-homocysteine + H(+). It catalyses the reaction 1,2-di-(9Z-octadecenoyl)-sn-glycero-3-phosphoethanolamine + S-adenosyl-L-methionine = 1,2-di-(9Z-octadecenoyl)-sn-glycero-3-phospho-N-methylethanolamine + S-adenosyl-L-homocysteine + H(+). It carries out the reaction 1,2-di-(9Z-octadecenoyl)-sn-glycero-3-phospho-N-methylethanolamine + S-adenosyl-L-methionine = 1,2-di-(9Z-octadecenoyl)-sn-glycero-3-phospho-N,N-dimethylethanolamine + S-adenosyl-L-homocysteine + H(+). The enzyme catalyses 1,2-di-(9Z-octadecenoyl)-sn-glycero-3-phospho-N,N-dimethylethanolamine + S-adenosyl-L-methionine = 1,2-di-(9Z-octadecenoyl)-sn-glycero-3-phosphocholine + S-adenosyl-L-homocysteine + H(+). The catalysed reaction is 1,2-di-(9Z,12Z-octadecadienoyl)-sn-glycero-3-phosphoethanolamine + S-adenosyl-L-methionine = 1,2-di-(9Z,12Z-octadecadienoyl)-sn-glycero-3-phospho-N-methylethanolamine + S-adenosyl-L-homocysteine + H(+). It catalyses the reaction 1,2-di-(9Z,12Z-octadecadienoyl)-sn-glycero-3-phospho-N-methylethanolamine + S-adenosyl-L-methionine = 1,2-di-(9Z,12Z-octadecadienoyl)-sn-glycero-3-phospho-N,N-dimethylethanolamine + S-adenosyl-L-homocysteine + H(+). It carries out the reaction 1,2-di-(9Z,12Z-octadecadienoyl)-sn-glycero-3-phospho-N,N-dimethylethanolamine + S-adenosyl-L-methionine = 1,2-di-(9Z,12Z-octadecadienoyl)-sn-glycero-3-phosphocholine + S-adenosyl-L-homocysteine + H(+). The enzyme catalyses 1,2-di-(9Z,12Z,15Z-octadecatrienoyl)-sn-glycero-3-phosphoethanolamine + S-adenosyl-L-methionine = 1,2-di-(9Z,12Z,15Z-octadecatrienoyl)-sn-glycero-3-phospho-N-methylethanolamine + S-adenosyl-L-homocysteine + H(+). The catalysed reaction is 1,2-di-(9Z,12Z,15Z-octadecatrienoyl)-sn-glycero-3-phospho-N-methylethanolamine + S-adenosyl-L-methionine = 1,2-di-(9Z,12Z,15Z-octadecatrienoyl)-sn-glycero-3-phospho-N,N-dimethylethanolamine + S-adenosyl-L-homocysteine + H(+). It catalyses the reaction 1,2-di-(9Z,12Z,15Z-octadecatrienoyl)-sn-glycero-3-phospho-N,N-dimethylethanolamine + S-adenosyl-L-methionine = 1,2-di-(9Z,12Z,15Z-octadecatrienoyl)-sn-glycero-3-phosphocholine + S-adenosyl-L-homocysteine + H(+). It carries out the reaction 1-hexadecanoyl-2-(4Z,7Z,10Z,13Z,16Z,19Z-docosahexaenoyl)-sn-glycero-3-phosphoethanolamine + S-adenosyl-L-methionine = 1-hexadecanoyl-2-(4Z,7Z,10Z,13Z,16Z,19Z-docosahexaenoyl)-sn-glycero-3-phospho-N-methylethanolamine + S-adenosyl-L-homocysteine + H(+). The enzyme catalyses 1-hexadecanoyl-2-(4Z,7Z,10Z,13Z,16Z,19Z-docosahexaenoyl)-sn-glycero-3-phospho-N-methylethanolamine + S-adenosyl-L-methionine = 1-hexadecanoyl-2-(4Z,7Z,10Z,13Z,16Z,19Z-docosahexaenoyl)-sn-glycero-3-phospho-N,N-dimethylethanolamine + S-adenosyl-L-homocysteine + H(+). The catalysed reaction is 1-hexadecanoyl-2-(4Z,7Z,10Z,13Z,16Z,19Z-docosahexaenoyl)-sn-glycero-3-phospho-N,N-dimethylethanolamine + S-adenosyl-L-methionine = 1-hexadecanoyl-2-(4Z,7Z,10Z,13Z,16Z,19Z-docosahexaenoyl)-sn-glycero-3-phosphocholine + S-adenosyl-L-homocysteine + H(+). Its pathway is phospholipid metabolism; phosphatidylcholine biosynthesis. Functionally, catalyzes the three sequential steps of the methylation pathway for the biosynthesis of phosphatidylcholine, a critical and essential component for membrane structure. Uses S-adenosylmethionine (S-adenosyl-L-methionine, SAM or AdoMet) as the methyl group donor for the methylation of phosphatidylethanolamine (1,2-diacyl-sn-glycero-3-phosphoethanolamine, PE) to phosphatidylmonomethylethanolamine (1,2-diacyl-sn-glycero-3-phospho-N-methylethanolamine, PMME), PMME to phosphatidyldimethylethanolamine (1,2-diacyl-sn-glycero-3-phospho-N,N-dimethylethanolamine, PDME), and PDME to phosphatidylcholine (1,2-diacyl-sn-glycero-3-phosphocholine, PC), producing S-adenosyl-L-homocysteine in each step. The polypeptide is Phosphatidylethanolamine N-methyltransferase (Rattus norvegicus (Rat)).